The primary structure comprises 375 residues: N-acetyldiaminopimelate deacetylase (375 aa).

Aspartate 69 is an active-site residue. Glutamate 128 serves as the catalytic Proton acceptor.

It belongs to the peptidase M20A family. N-acetyldiaminopimelate deacetylase subfamily.

The catalysed reaction is N-acetyl-(2S,6S)-2,6-diaminopimelate + H2O = (2S,6S)-2,6-diaminopimelate + acetate. Its pathway is amino-acid biosynthesis; L-lysine biosynthesis via DAP pathway; LL-2,6-diaminopimelate from (S)-tetrahydrodipicolinate (acetylase route): step 3/3. Catalyzes the conversion of N-acetyl-diaminopimelate to diaminopimelate and acetate. The chain is N-acetyldiaminopimelate deacetylase from Priestia megaterium (strain ATCC 12872 / QMB1551) (Bacillus megaterium).